Here is a 26-residue protein sequence, read N- to C-terminus: Mucus envelope protein (26 aa).

In terms of processing, glycosylated. Produced by the opercular gland in the gill cavity and secreted as part of the mucus cocoon.

The protein localises to the secreted. Its function is as follows. Exhibits antibacterial activity. May play a role in protection against parasite settlement. The polypeptide is Mucus envelope protein (Scarus vetula (Queen parrotfish)).